The primary structure comprises 445 residues: Putative ATP-dependent RNA helicase L538 (445 aa).

The region spanning 14–151 (IEFMKNNRGV…AVLVNIVRGE (138 aa)) is the Helicase ATP-binding domain. 27–34 (HSTGAGKT) provides a ligand contact to ATP. Positions 101-104 (DEAH) match the DEAH box motif. The Helicase C-terminal domain maps to 273–442 (KIEDIMKYII…VIDASIENNY (170 aa)).

The protein belongs to the DEAD box helicase family. DEAH subfamily.

Its subcellular location is the virion. It catalyses the reaction ATP + H2O = ADP + phosphate + H(+). The sequence is that of Putative ATP-dependent RNA helicase L538 from Acanthamoeba polyphaga mimivirus (APMV).